The sequence spans 875 residues: Protein HIR2 (875 aa).

WD repeat units follow at residues 10–47 (IHNEQVNALAALGPYIILAGSGGHVMAWRQQQLVDTAF), 118–158 (KSPS…KLSE), 163–201 (KASKPITGIIDPTGQTFTVMTSDRSILVYQINKTGTHKL), 237–277 (PNNA…PAFY), 278–316 (EKPNLKKGTSTRYNLIATSGSTDGTILVWNTKRMKPLFN), and 320–359 (VSSTAINDMSWSQDGFTLFAISNDATLYTFAFQEKDLGVA). Residues 398–473 (ESASAAPIPN…IAPGSKKQKK (76 aa)) are disordered. Residues 424-446 (ANNQTNGIKTIQSTSMEFNTPSY) are compositionally biased toward polar residues. 2 WD repeats span residues 546 to 587 (LFQD…LMAP) and 589 to 626 (VLGVSISFLEACGTYLLCLTSIGELYCWNIEQKKLAFP). At S713 the chain carries Phosphoserine.

The protein belongs to the WD repeat HIR1 family. In terms of assembly, component of the HIR complex, composed of HIR1, HIR2, HIR3 and HPC2. This complex may consist of one copy of HIR1 and HIR3 and two copies of HIR2 and HPC2. The HIR complex interacts with ASF1. Interacts with SNF2. Interacts with SNF5. Interacts with SWI3. Interacts with RTT106.

It is found in the nucleus. It localises to the chromosome. Functionally, component of the HIR complex, which cooperates with ASF1 to promote replication-independent chromatin assembly. The HIR complex is also required for the periodic repression of three of the four histone gene loci during the cell cycle as well as for autogenous regulation of the HTA1-HTB1 locus by H2A and H2B. DNA-binding by the HIR complex may repress transcription by inhibiting nucleosome remodeling by the SWI/SNF complex. The HIR complex may also be required for transcriptional silencing of centromeric, telomeric and mating-type loci in the absence of CAF-1. The protein is Protein HIR2 (HIR2) of Saccharomyces cerevisiae (strain ATCC 204508 / S288c) (Baker's yeast).